Here is a 229-residue protein sequence, read N- to C-terminus: Potassium/proton antiporter CemA (229 aa).

The next 3 membrane-spanning stretches (helical) occupy residues 6-26, 107-127, and 189-209; these read AFIPFFDFTSIVFLPWLISLC, ILHFSTNLISFVILSGYSFWG, and ILSGLVSTFPVILDTIFKYWI.

It belongs to the CemA family.

It localises to the plastid. The protein localises to the chloroplast inner membrane. The catalysed reaction is K(+)(in) + H(+)(out) = K(+)(out) + H(+)(in). Functionally, contributes to K(+)/H(+) antiport activity by supporting proton efflux to control proton extrusion and homeostasis in chloroplasts in a light-dependent manner to modulate photosynthesis. Prevents excessive induction of non-photochemical quenching (NPQ) under continuous-light conditions. Indirectly promotes efficient inorganic carbon uptake into chloroplasts. The polypeptide is Potassium/proton antiporter CemA (Lepidium virginicum (Virginia pepperweed)).